We begin with the raw amino-acid sequence, 376 residues long: Palmitoyl-[acyl-carrier-protein] 4-desaturase 2, chloroplastic (376 aa).

The N-terminal 33 residues, 1–33 (MELHLALRASPLPAADPGRRPPPPRGNFATNCT), are a transit peptide targeting the chloroplast. Glu114, Glu149, His152, Glu202, Glu235, and His238 together coordinate Fe cation.

It belongs to the fatty acid desaturase type 2 family. In terms of assembly, homodimer. Fe(2+) is required as a cofactor. Preferentially expressed in the flower labellum.

Its subcellular location is the plastid. The protein resides in the chloroplast stroma. It catalyses the reaction hexadecanoyl-[ACP] + 2 reduced [2Fe-2S]-[ferredoxin] + O2 + 2 H(+) = (4Z)-hexadecenoyl-[ACP] + 2 oxidized [2Fe-2S]-[ferredoxin] + 2 H2O. The catalysed reaction is octadecanoyl-[ACP] + 2 reduced [2Fe-2S]-[ferredoxin] + O2 + 2 H(+) = (9Z)-octadecenoyl-[ACP] + 2 oxidized [2Fe-2S]-[ferredoxin] + 2 H2O. It functions in the pathway lipid metabolism; fatty acid metabolism. In terms of biological role, converts stearoyl-ACP to oleoyl-ACP by introduction of a cis double bond between carbons 9 and 10 of the acyl chain. Converts palmitoyl-ACP to (4Z)-hexadec-4-enoyl-ACP by introduction of a cis double bond between carbons 4 and 5 of the acyl chain. Catalyzes the desaturation of saturated fatty acid 18:0 and 16:0 to generate 18:1 (delta-9) and 16:1 (delta-4) intermediates, expected to give rise to 9-alkenes and 12-alkenes, respectively. The sequence is that of Palmitoyl-[acyl-carrier-protein] 4-desaturase 2, chloroplastic (SAD2) from Ophrys sphegodes (Early spider orchid).